Here is a 488-residue protein sequence, read N- to C-terminus: MAHFNQNFLDSIERDLPSHLSMEDFIAYSNKPLRLSIRVNTLKISHDNFIDLMTPKGWHFEPIPWCKDGFWVTLTQEIQLGNTIEHLQGLFYIQEASSMLPPTALFEPLEVAVAAENTEDDGSDDFSNKIVLDMASAPGSKTTQIAALMKNQGLLIANEYSASRVKVLHANVARMGVANCALTHFDARVFGEYMFETFDSILLDAPCSGEGTIRKDPDALKNWDNNDDKGIVETQKALIESAFLALKVGGSLVYSTCALSRQENQDVCHHLKSLYGDAVEFGSLATLFPQADKACTEEGFLHVWPQIYDSEGFFVAKIYKTSAVERQLPEPRKQKNFPFTLAKPKQVEELAQYFRDSFSISLPDNAQVMVRDLEFWLFPSPVIPLIGKMRYQRIGIKLADALKKGYKVRHEAVLALSSPTRFELSDEQAKEFLMGRDISLLEKGKPQGEVIVSYASNPLGVAKHLGNKLKNNLPRDLVKDKIALYSHN.

S-adenosyl-L-methionine contacts are provided by residues 135 to 141 (ASAPGSK), Glu-159, Asp-186, and Asp-204. Cys-257 (nucleophile) is an active-site residue.

This sequence belongs to the class I-like SAM-binding methyltransferase superfamily. RsmB/NOP family.

Its subcellular location is the cytoplasm. The catalysed reaction is cytidine(1407) in 16S rRNA + S-adenosyl-L-methionine = 5-methylcytidine(1407) in 16S rRNA + S-adenosyl-L-homocysteine + H(+). In terms of biological role, specifically methylates the cytosine at position 1407 (m5C1407) of 16S rRNA. This Shewanella pealeana (strain ATCC 700345 / ANG-SQ1) protein is Ribosomal RNA small subunit methyltransferase F.